We begin with the raw amino-acid sequence, 260 residues long: uncharacterized protein (260 aa).

The signal sequence occupies residues 1–22 (MGYLKRFALYISILVLIVMVAG). Cys23 is lipidated: N-palmitoyl cysteine. The S-diacylglycerol cysteine moiety is linked to residue Cys23.

Belongs to the staphylococcal tandem lipoprotein family.

The protein resides in the cell membrane. This is an uncharacterized protein from Staphylococcus aureus (strain bovine RF122 / ET3-1).